A 478-amino-acid polypeptide reads, in one-letter code: Bifunctional protein HldE (478 aa).

Residues 1–318 form a ribokinase region; it reads MKVTLPDFRQ…ENAIRGRADT (318 aa). 195-198 provides a ligand contact to ATP; sequence NLSE. Asp264 is an active-site residue. A cytidylyltransferase region spans residues 344 to 478; that stretch reads MTNGCFDILH…NTIKANASKS (135 aa).

It in the N-terminal section; belongs to the carbohydrate kinase PfkB family. In the C-terminal section; belongs to the cytidylyltransferase family. In terms of assembly, homodimer.

The enzyme catalyses D-glycero-beta-D-manno-heptose 7-phosphate + ATP = D-glycero-beta-D-manno-heptose 1,7-bisphosphate + ADP + H(+). The catalysed reaction is D-glycero-beta-D-manno-heptose 1-phosphate + ATP + H(+) = ADP-D-glycero-beta-D-manno-heptose + diphosphate. The protein operates within nucleotide-sugar biosynthesis; ADP-L-glycero-beta-D-manno-heptose biosynthesis; ADP-L-glycero-beta-D-manno-heptose from D-glycero-beta-D-manno-heptose 7-phosphate: step 1/4. It participates in nucleotide-sugar biosynthesis; ADP-L-glycero-beta-D-manno-heptose biosynthesis; ADP-L-glycero-beta-D-manno-heptose from D-glycero-beta-D-manno-heptose 7-phosphate: step 3/4. Functionally, catalyzes the phosphorylation of D-glycero-D-manno-heptose 7-phosphate at the C-1 position to selectively form D-glycero-beta-D-manno-heptose-1,7-bisphosphate. In terms of biological role, catalyzes the ADP transfer from ATP to D-glycero-beta-D-manno-heptose 1-phosphate, yielding ADP-D-glycero-beta-D-manno-heptose. This chain is Bifunctional protein HldE, found in Pectobacterium carotovorum subsp. carotovorum (strain PC1).